The chain runs to 560 residues: Embryonal Fyn-associated substrate (560 aa).

The SH3 domain maps to 5-68 (TSAQLARALY…PANRVKLLPA (64 aa)). Disordered regions lie at residues 176–219 (VVPQ…LYAA) and 241–372 (ANGE…NEYE). Residues 198 to 210 (AELERDPEWEGGR) are compositionally biased toward basic and acidic residues. Residue Tyr253 is modified to Phosphotyrosine; by SRC. Residues 259 to 268 (GPEPPSPEPP) show a composition bias toward pro residues. 2 short sequence motifs (SH3-binding) span residues 304–310 (RPLPALP) and 334–340 (RPLPPPP). Residues 305–315 (PLPALPVSEAP) are compositionally biased toward low complexity. Residues 351-361 (PEGDPECREVA) show a composition bias toward basic and acidic residues. A divergent helix-loop-helix motif region spans residues 437 to 487 (FYAGQCQSHYSALQAAVAALVASTQANQPPCLFVPHGKRVVVAAHRLVFVG).

Belongs to the CAS family. Phosphorylated on multiple tyrosine residues. Phosphorylated on tyrosines by FYN and SRC. As to expression, widely expressed. Higher levels found in placenta and embryo. Lower levels found in brain, brainstem, muscle and lung. No expression in liver and intestine.

In terms of biological role, docking protein which plays a central coordinating role for tyrosine-kinase-based signaling related to cell adhesion. May serve as an activator of SRC and a downstream effector. Interacts with the SH3 domain of FYN and with CRK, SRC, and YES. The sequence is that of Embryonal Fyn-associated substrate (Efs) from Mus musculus (Mouse).